Consider the following 191-residue polypeptide: Inosine triphosphate pyrophosphatase (191 aa).

15 to 20 lines the ITP pocket; that stretch reads TGNTNK. Glu-43 is a Mg(2+) binding site. ITP is bound by residues Lys-55, 71 to 72, Lys-88, 147 to 150, Lys-168, and 173 to 174; these read DT, FGWD, and HR.

Belongs to the HAM1 NTPase family. In terms of assembly, homodimer. It depends on Mg(2+) as a cofactor. The cofactor is Mn(2+).

The protein localises to the cytoplasm. The protein resides in the nucleus. The enzyme catalyses ITP + H2O = IMP + diphosphate + H(+). It catalyses the reaction dITP + H2O = dIMP + diphosphate + H(+). It carries out the reaction XTP + H2O = XMP + diphosphate + H(+). Functionally, pyrophosphatase that hydrolyzes non-canonical purine nucleotides such as inosine triphosphate (ITP), deoxyinosine triphosphate (dITP) or xanthosine 5'-triphosphate (XTP) to their respective monophosphate derivatives. The enzyme does not distinguish between the deoxy- and ribose forms. Probably excludes non-canonical purines from RNA and DNA precursor pools, thus preventing their incorporation into RNA and DNA and avoiding chromosomal lesions. The chain is Inosine triphosphate pyrophosphatase from Chaetomium globosum (strain ATCC 6205 / CBS 148.51 / DSM 1962 / NBRC 6347 / NRRL 1970) (Soil fungus).